An 84-amino-acid polypeptide reads, in one-letter code: UPF0153 protein PA1578.1 (84 aa).

It belongs to the UPF0153 family.

The polypeptide is UPF0153 protein PA1578.1 (Pseudomonas aeruginosa (strain ATCC 15692 / DSM 22644 / CIP 104116 / JCM 14847 / LMG 12228 / 1C / PRS 101 / PAO1)).